Consider the following 396-residue polypeptide: Interactor of constitutive active ROPs 5 (396 aa).

Disordered regions lie at residues 1–49 (MQTP…TQIP) and 99–122 (ALKR…NASE). 2 coiled-coil regions span residues 67–124 (KKRT…SEDS) and 158–366 (LSSA…TAAS). The span at 99-115 (ALKREAQEEAEDAKHQL) shows a compositional bias: basic and acidic residues.

It belongs to the ICR family. In terms of assembly, component of the active ARAC10-IRC5-KIN13A complex. Homooligomer. Interacts (via C-terminus) with ARAC4, ARAC10, ARAC11 and (via N-terminus) with KIN13A (via C-terminus), but no interactions with SEC3A. In terms of tissue distribution, expressed in xylem cells in the roots and in stamens, petals and pollen.

The protein localises to the cell membrane. It localises to the cytoplasm. It is found in the cytoskeleton. Its function is as follows. ROP effector binding specifically activated ROPs and linking them to the microtubule cytoskeleton. Involved in ROP-regulated polar growth. Involved in local disassembly of cortical microtubules when associated with ARAC10 and KIN13A and conversely also mediates the elimination of ARAC10 from the plasma membrane by the cortical microtubules. Accumulates at the plus end of shrinking microtubules. Targets KIN13A to microtubules. The polypeptide is Interactor of constitutive active ROPs 5 (ICR5) (Arabidopsis thaliana (Mouse-ear cress)).